A 128-amino-acid polypeptide reads, in one-letter code: S-adenosylmethionine decarboxylase proenzyme (128 aa).

Ser61 serves as the catalytic Schiff-base intermediate with substrate; via pyruvic acid. Pyruvic acid (Ser); by autocatalysis is present on Ser61. His66 functions as the Proton acceptor; for processing activity in the catalytic mechanism. Cys81 functions as the Proton donor; for catalytic activity in the catalytic mechanism.

Belongs to the prokaryotic AdoMetDC family. Type 1 subfamily. In terms of assembly, heterotetramer of two alpha and two beta chains arranged as a dimer of alpha/beta heterodimers. Pyruvate is required as a cofactor. In terms of processing, is synthesized initially as an inactive proenzyme. Formation of the active enzyme involves a self-maturation process in which the active site pyruvoyl group is generated from an internal serine residue via an autocatalytic post-translational modification. Two non-identical subunits are generated from the proenzyme in this reaction, and the pyruvate is formed at the N-terminus of the alpha chain, which is derived from the carboxyl end of the proenzyme. The post-translation cleavage follows an unusual pathway, termed non-hydrolytic serinolysis, in which the side chain hydroxyl group of the serine supplies its oxygen atom to form the C-terminus of the beta chain, while the remainder of the serine residue undergoes an oxidative deamination to produce ammonia and the pyruvoyl group blocking the N-terminus of the alpha chain.

The catalysed reaction is S-adenosyl-L-methionine + H(+) = S-adenosyl 3-(methylsulfanyl)propylamine + CO2. It functions in the pathway amine and polyamine biosynthesis; S-adenosylmethioninamine biosynthesis; S-adenosylmethioninamine from S-adenosyl-L-methionine: step 1/1. Its function is as follows. Catalyzes the decarboxylation of S-adenosylmethionine to S-adenosylmethioninamine (dcAdoMet), the propylamine donor required for the synthesis of the polyamines spermine and spermidine from the diamine putrescine. The protein is S-adenosylmethionine decarboxylase proenzyme of Synechococcus sp. (strain WH7803).